A 228-amino-acid chain; its full sequence is ATP synthase subunit a (228 aa).

The next 6 membrane-spanning stretches (helical) occupy residues 14–34 (YFLLMPMTLASMLMAISWLFF), 71–91 (WVPIITTVFILLFSVNVLGLL), 101–121 (ISLTYSIGIPIWMSVNILGFY), 139–159 (FLLPLMVIIETLSLFAQPIAL), 165–185 (ANLTAGHLLIYLMSTAIWVLM), and 188–208 (VAIASITLIIFILLFLLEIGV).

Belongs to the ATPase A chain family. As to quaternary structure, F-type ATPases have 2 components, CF(1) - the catalytic core - and CF(0) - the membrane proton channel. CF(1) has five subunits: alpha(3), beta(3), gamma(1), delta(1), epsilon(1). CF(0) has three main subunits: a, b and c.

It localises to the mitochondrion inner membrane. Its function is as follows. Mitochondrial membrane ATP synthase (F(1)F(0) ATP synthase or Complex V) produces ATP from ADP in the presence of a proton gradient across the membrane which is generated by electron transport complexes of the respiratory chain. F-type ATPases consist of two structural domains, F(1) - containing the extramembraneous catalytic core and F(0) - containing the membrane proton channel, linked together by a central stalk and a peripheral stalk. During catalysis, ATP synthesis in the catalytic domain of F(1) is coupled via a rotary mechanism of the central stalk subunits to proton translocation. Key component of the proton channel; it may play a direct role in the translocation of protons across the membrane. The sequence is that of ATP synthase subunit a (ATP6) from Pisaster ochraceus (Ochre sea star).